A 289-amino-acid chain; its full sequence is 4-diphosphocytidyl-2-C-methyl-D-erythritol kinase (289 aa).

Residue Lys-11 is part of the active site. 93–103 (PLAAGLAGGSA) is a binding site for ATP. Asp-135 is a catalytic residue.

It belongs to the GHMP kinase family. IspE subfamily.

The enzyme catalyses 4-CDP-2-C-methyl-D-erythritol + ATP = 4-CDP-2-C-methyl-D-erythritol 2-phosphate + ADP + H(+). The protein operates within isoprenoid biosynthesis; isopentenyl diphosphate biosynthesis via DXP pathway; isopentenyl diphosphate from 1-deoxy-D-xylulose 5-phosphate: step 3/6. In terms of biological role, catalyzes the phosphorylation of the position 2 hydroxy group of 4-diphosphocytidyl-2C-methyl-D-erythritol. The polypeptide is 4-diphosphocytidyl-2-C-methyl-D-erythritol kinase (Thermoanaerobacter sp. (strain X514)).